We begin with the raw amino-acid sequence, 363 residues long: tRNA(Met) cytidine acetate ligase (363 aa).

Residues 7–20, Gly96, Asn152, and Arg175 each bind ATP; that span reads IAEY…HKYL.

This sequence belongs to the TmcAL family.

The protein resides in the cytoplasm. The enzyme catalyses cytidine(34) in elongator tRNA(Met) + acetate + ATP = N(4)-acetylcytidine(34) in elongator tRNA(Met) + AMP + diphosphate. Functionally, catalyzes the formation of N(4)-acetylcytidine (ac(4)C) at the wobble position of elongator tRNA(Met), using acetate and ATP as substrates. First activates an acetate ion to form acetyladenylate (Ac-AMP) and then transfers the acetyl group to tRNA to form ac(4)C34. The polypeptide is tRNA(Met) cytidine acetate ligase (Streptococcus suis (strain 98HAH33)).